Here is a 291-residue protein sequence, read N- to C-terminus: N-acetylmannosamine kinase (291 aa).

Residues 5–12 and 132–139 contribute to the ATP site; these read AIDIGGTK and GVGGGVVS. H156, C166, C168, and C173 together coordinate Zn(2+).

The protein belongs to the ROK (NagC/XylR) family. NanK subfamily. As to quaternary structure, homodimer.

The catalysed reaction is an N-acyl-D-mannosamine + ATP = an N-acyl-D-mannosamine 6-phosphate + ADP + H(+). It functions in the pathway amino-sugar metabolism; N-acetylneuraminate degradation; D-fructose 6-phosphate from N-acetylneuraminate: step 2/5. Its function is as follows. Catalyzes the phosphorylation of N-acetylmannosamine (ManNAc) to ManNAc-6-P. This is N-acetylmannosamine kinase from Escherichia coli (strain 55989 / EAEC).